Here is a 576-residue protein sequence, read N- to C-terminus: WD repeat-containing protein 26 (576 aa).

Positions 1–20 (MQSNGTGQEQNHPANTQNGD) are enriched in polar residues. Residues 1 to 46 (MQSNGTGQEQNHPANTQNGDANGLQSNAGSASGASGTGSGSLKKKK) are disordered. The span at 21–34 (ANGLQSNAGSASGA) shows a compositional bias: low complexity. The residue at position 49 (Ser49) is a Phosphoserine. One can recognise a LisH domain in the interval 51-83 (AEEDVIRLIGQHLHGLGLNQTVDLLMQESGCRL). The CTLH domain maps to 84–143 (EHSSATKFRNHVMEGEWDKAENDLNELKALMHSPNAIVRMKFLLLQQKYLEYLEDGKVLE). WD repeat units lie at residues 265–304 (EHCN…HQLK), 311–350 (GHAY…GELR), 356–396 (SHED…ESWE), 436–475 (QEDH…LVRK), 478–520 (GVTQ…PIVE), and 523–563 (GHTR…DAQE).

Forms homooligomers. Identified in the CTLH complex that contains at least MAEA, RMND5A (or alternatively its paralog RMND5B), GID8, WDR26, and RANBP9 and/or RANBP10. Interacts with DDB1-CUL4A/B E3 ligase complexes.

It is found in the cytoplasm. The protein localises to the nucleus. It localises to the mitochondrion. In terms of biological role, G-beta-like protein involved in cell signal transduction. Acts as a negative regulator in MAPK signaling pathway. Functions as a scaffolding protein to promote G beta:gamma-mediated PLCB2 plasma membrane translocation and subsequent activation in leukocytes. Core component of the CTLH E3 ubiquitin-protein ligase complex that mediates ubiquitination and subsequent proteasomal degradation of target proteins. Acts as a negative regulator of the canonical Wnt signaling pathway through preventing ubiquitination of beta-catenin CTNNB1 by the beta-catenin destruction complex, thus negatively regulating CTNNB1 degradation. Serves as a scaffold to coordinate PI3K/AKT pathway-driven cell growth and migration. Protects cells from oxidative stress-induced apoptosis via the down-regulation of AP-1 transcriptional activity as well as by inhibiting cytochrome c release from mitochondria. Also protects cells by promoting hypoxia-mediated autophagy and mitophagy. The polypeptide is WD repeat-containing protein 26 (wdr26) (Danio rerio (Zebrafish)).